The following is a 194-amino-acid chain: MSEIKLIVGLGNPGDKYADTRHNAGEWLINRLARQFHFSLTPESKFSGKTARTVINGNEIRFLVPTTFMNLSGKAISSLANFYRIKPEEILVIHDELDLPPGVAKIKQGGGHGGHNGLRDTIAQLGNNKNFYRLRVGIGHPGDKNLVSAYVLNKPSLTDWQLIDKALDEATSCVDILIKDGITKATNRLNAFKA.

Tyrosine 17 contributes to the tRNA binding site. The Proton acceptor role is filled by histidine 22. Phenylalanine 68, asparagine 70, and asparagine 116 together coordinate tRNA.

The protein belongs to the PTH family. As to quaternary structure, monomer.

The protein resides in the cytoplasm. The catalysed reaction is an N-acyl-L-alpha-aminoacyl-tRNA + H2O = an N-acyl-L-amino acid + a tRNA + H(+). Functionally, hydrolyzes ribosome-free peptidyl-tRNAs (with 1 or more amino acids incorporated), which drop off the ribosome during protein synthesis, or as a result of ribosome stalling. In terms of biological role, catalyzes the release of premature peptidyl moieties from peptidyl-tRNA molecules trapped in stalled 50S ribosomal subunits, and thus maintains levels of free tRNAs and 50S ribosomes. The chain is Peptidyl-tRNA hydrolase from Pasteurella multocida (strain Pm70).